The sequence spans 1462 residues: Gag-Pro-Pol polyprotein (1462 aa).

A lipid anchor (N-myristoyl glycine; by host) is attached at glycine 2. The tract at residues 93–142 is disordered; sequence QIPSRPAPPPPSSSTHDPPDSDPQIPPPYVEPTAPQVLPVMHPHGAPPNH. Position 105 is a phosphoserine; by host MAPK1 (serine 105). The PPXY motif signature appears at 118–121; the sequence is PPPY. Positions 124 to 127 match the PTAP/PSAP motif motif; that stretch reads PTAP. 2 CCHC-type zinc fingers span residues 355 to 372 and 378 to 395; these read QPCF…DCTQ and GPCP…DCPR. The Peptidase A2 domain maps to 476-554; it reads IEALLDTGAD…NNWAIIGRDA (79 aa). Catalysis depends on aspartate 481, which acts as the Protease; shared with dimeric partner. Residues 614–804 form the Reverse transcriptase domain; the sequence is LEAGHIEPYT…GTIKFLGQII (191 aa). Mg(2+) is bound by residues aspartate 680, aspartate 755, aspartate 756, aspartate 1040, glutamate 1074, aspartate 1096, aspartate 1157, aspartate 1230, and aspartate 1287. One can recognise an RNase H type-1 domain in the interval 1031–1165; the sequence is INTAPCLFSD…TDALLITPVL (135 aa). The Integrase catalytic domain occupies 1219–1388; sequence RGLLPNHIWQ…QPIPETHSLS (170 aa). Positions 1393 to 1443 form a DNA-binding region, integrase-type; it reads HWYYFKLPGLNSRQWKGPQEALQEAAGAALIPVSASSAQWIPWRLLKRAAC.

Homodimer; the homodimers are part of the immature particles. Interacts with human TSG101 and NEDD4; these interactions are essential for budding and release of viral particles. In terms of assembly, homodimer; further assembles as homohexamers. The cofactor is Mg(2+). Post-translationally, phosphorylation of the matrix protein p19 by MAPK1 seems to play a role in budding. Myristoylated. Myristoylation of the matrix (MA) domain mediates the transport and binding of Gag polyproteins to the host plasma membrane and is required for the assembly of viral particles. In terms of processing, specific enzymatic cleavages by the viral protease yield mature proteins. The polyprotein is cleaved during and after budding, this process is termed maturation. The protease is autoproteolytically processed at its N- and C-termini.

Its subcellular location is the virion. The enzyme catalyses Endonucleolytic cleavage to 5'-phosphomonoester.. It catalyses the reaction DNA(n) + a 2'-deoxyribonucleoside 5'-triphosphate = DNA(n+1) + diphosphate. Functionally, the matrix domain targets Gag, Gag-Pro and Gag-Pro-Pol polyproteins to the plasma membrane via a multipartite membrane binding signal, that includes its myristoylated N-terminus. Matrix protein. Its function is as follows. Forms the spherical core of the virus that encapsulates the genomic RNA-nucleocapsid complex. In terms of biological role, binds strongly to viral nucleic acids and promote their aggregation. Also destabilizes the nucleic acids duplexes via highly structured zinc-binding motifs. Functionally, the aspartyl protease mediates proteolytic cleavages of Gag and Gag-Pol polyproteins during or shortly after the release of the virion from the plasma membrane. Cleavages take place as an ordered, step-wise cascade to yield mature proteins. This process is called maturation. Displays maximal activity during the budding process just prior to particle release from the cell (Potential). Cleaves the translation initiation factor eIF4G leading to the inhibition of host cap-dependent translation. RT is a multifunctional enzyme that converts the viral RNA genome into dsDNA in the cytoplasm, shortly after virus entry into the cell. This enzyme displays a DNA polymerase activity that can copy either DNA or RNA templates, and a ribonuclease H (RNase H) activity that cleaves the RNA strand of RNA-DNA heteroduplexes in a partially processive 3' to 5'-endonucleasic mode. Conversion of viral genomic RNA into dsDNA requires many steps. A tRNA-Pro binds to the primer-binding site (PBS) situated at the 5'-end of the viral RNA. RT uses the 3' end of the tRNA primer to perform a short round of RNA-dependent minus-strand DNA synthesis. The reading proceeds through the U5 region and ends after the repeated (R) region which is present at both ends of viral RNA. The portion of the RNA-DNA heteroduplex is digested by the RNase H, resulting in a ssDNA product attached to the tRNA primer. This ssDNA/tRNA hybridizes with the identical R region situated at the 3' end of viral RNA. This template exchange, known as minus-strand DNA strong stop transfer, can be either intra- or intermolecular. RT uses the 3' end of this newly synthesized short ssDNA to perform the RNA-dependent minus-strand DNA synthesis of the whole template. RNase H digests the RNA template except for a polypurine tract (PPT) situated at the 5' end of the genome. It is not clear if both polymerase and RNase H activities are simultaneous. RNase H probably can proceed both in a polymerase-dependent (RNA cut into small fragments by the same RT performing DNA synthesis) and a polymerase-independent mode (cleavage of remaining RNA fragments by free RTs). Secondly, RT performs DNA-directed plus-strand DNA synthesis using the PPT that has not been removed by RNase H as primer. PPT and tRNA primers are then removed by RNase H. The 3' and 5' ssDNA PBS regions hybridize to form a circular dsDNA intermediate. Strand displacement synthesis by RT to the PBS and PPT ends produces a blunt ended, linear dsDNA copy of the viral genome that includes long terminal repeats (LTRs) at both ends. Its function is as follows. Catalyzes viral DNA integration into the host chromosome, by performing a series of DNA cutting and joining reactions. This is Gag-Pro-Pol polyprotein (gag-pro-pol) from Human T-cell leukemia virus 1 (isolate Caribbea HS-35 subtype A) (HTLV-1).